The sequence spans 337 residues: tRNA N6-adenosine threonylcarbamoyltransferase (337 aa).

Fe cation is bound by residues His111 and His115. Substrate-binding positions include 134–138, Asp167, Gly180, and Asn272; that span reads LVSGG. Residue Asp300 coordinates Fe cation.

The protein belongs to the KAE1 / TsaD family. Fe(2+) is required as a cofactor.

It is found in the cytoplasm. The enzyme catalyses L-threonylcarbamoyladenylate + adenosine(37) in tRNA = N(6)-L-threonylcarbamoyladenosine(37) in tRNA + AMP + H(+). Functionally, required for the formation of a threonylcarbamoyl group on adenosine at position 37 (t(6)A37) in tRNAs that read codons beginning with adenine. Is involved in the transfer of the threonylcarbamoyl moiety of threonylcarbamoyl-AMP (TC-AMP) to the N6 group of A37, together with TsaE and TsaB. TsaD likely plays a direct catalytic role in this reaction. The polypeptide is tRNA N6-adenosine threonylcarbamoyltransferase (Escherichia coli O139:H28 (strain E24377A / ETEC)).